The primary structure comprises 464 residues: RCC1-like G exchanging factor-like protein (464 aa).

A mitochondrion-targeting transit peptide spans 1–37 (MALVALVAGARLGRRLSGPGLGRGHWTAAGRSRSRRE). RCC1 repeat units lie at residues 58 to 124 (ADRV…LSSK), 128 to 191 (VTKV…VLTD), 193 to 247 (EGVF…FLTD), 248 to 300 (KGEV…AVSA), 302 to 353 (GGLF…VLNG), 354 to 411 (EGHV…ALTN), and 412 to 461 (KGEL…TLAK).

As to quaternary structure, forms a regulatory protein-RNA complex, consisting of RCC1L, NGRN, RPUSD3, RPUSD4, TRUB2, FASTKD2 and 16S mt-rRNA. Interacts with 16S mt-rRNA; this interaction is direct. Interacts with OPA1; this interaction is direct. In terms of assembly, asociates with the mitochondrial ribosome large subunit (mt-LSU). Asociates with the mitochondrial ribosome small subunit (mt-SSU). In terms of tissue distribution, ubiquitous.

The protein localises to the mitochondrion membrane. It is found in the mitochondrion inner membrane. In terms of biological role, guanine nucleotide exchange factor (GEF) for mitochondrial dynamin-related GTPase OPA1. Activates OPA1, by exchanging bound GDP for free GTP, and drives OPA1 and MFN1-dependent mitochondrial fusion. Plays an essential role in mitochondrial ribosome biogenesis. As a component of a functional protein-RNA module, consisting of RCC1L, NGRN, RPUSD3, RPUSD4, TRUB2, FASTKD2 and 16S mitochondrial ribosomal RNA (16S mt-rRNA), controls 16S mt-rRNA abundance and is required for intra-mitochondrial translation of core subunits of the oxidative phosphorylation system. Functionally, plays an essential role in mitochondrial ribosome biogenesis via its association with GTPases that play a role in the assembly of the large ribosome subunit. Its function is as follows. Plays an essential role in mitochondrial ribosome biogenesis via its association with GTPases that play a role in the assembly of the small ribosome subunit. The polypeptide is RCC1-like G exchanging factor-like protein (Homo sapiens (Human)).